Reading from the N-terminus, the 779-residue chain is Putative helicase V13 (779 aa).

Residues 477–642 (DNPKPFITSL…FVKEEELNEK (166 aa)) form the SF3 helicase domain. 504 to 511 (GKSNAGKS) serves as a coordination point for ATP.

The sequence is that of Putative helicase V13 from Acanthamoeba polyphaga (Amoeba).